The chain runs to 154 residues: uncharacterized protein (154 aa).

The 143-residue stretch at 1-143 (MTESERALLT…LRKLAGSLTK (143 aa)) folds into the HTH marR-type domain. Residues 57 to 80 (LSKLAMSLDLKPASVTRMTDILYK) constitute a DNA-binding region (H-T-H motif).

This is an uncharacterized protein from Bacillus subtilis (strain 168).